A 130-amino-acid chain; its full sequence is uncharacterized protein (130 aa).

A signal peptide spans 1–26 (MKFIYKLLFILSIVLFLFNNIITING). N-linked (GlcNAc...) asparagine glycosylation is present at Asn-88.

It localises to the secreted. This is an uncharacterized protein from Dictyostelium discoideum (Social amoeba).